A 375-amino-acid chain; its full sequence is DNA replication and repair protein RecF (375 aa).

Residue 30–37 (GNNGSGKS) participates in ATP binding.

It belongs to the RecF family.

The protein resides in the cytoplasm. In terms of biological role, the RecF protein is involved in DNA metabolism; it is required for DNA replication and normal SOS inducibility. RecF binds preferentially to single-stranded, linear DNA. It also seems to bind ATP. This Hahella chejuensis (strain KCTC 2396) protein is DNA replication and repair protein RecF.